We begin with the raw amino-acid sequence, 346 residues long: Glycerol-1-phosphate dehydrogenase [NAD(P)+] (346 aa).

Residues 93 to 97 and 115 to 118 each bind NAD(+); these read GTIID and TTAS. Residue Asp-120 coordinates substrate. Ser-124 provides a ligand contact to NAD(+). Position 167 (Asp-167) interacts with substrate. 2 residues coordinate Zn(2+): Asp-167 and His-247. His-251 is a binding site for substrate. A Zn(2+)-binding site is contributed by His-263.

The protein belongs to the glycerol-1-phosphate dehydrogenase family. Zn(2+) is required as a cofactor.

It localises to the cytoplasm. It carries out the reaction sn-glycerol 1-phosphate + NAD(+) = dihydroxyacetone phosphate + NADH + H(+). The enzyme catalyses sn-glycerol 1-phosphate + NADP(+) = dihydroxyacetone phosphate + NADPH + H(+). It functions in the pathway membrane lipid metabolism; glycerophospholipid metabolism. Functionally, catalyzes the NAD(P)H-dependent reduction of dihydroxyacetonephosphate (DHAP or glycerone phosphate) to glycerol 1-phosphate (G1P). The G1P thus generated is used as the glycerophosphate backbone of phospholipids in the cellular membranes of Archaea. The sequence is that of Glycerol-1-phosphate dehydrogenase [NAD(P)+] from Pyrococcus furiosus (strain ATCC 43587 / DSM 3638 / JCM 8422 / Vc1).